We begin with the raw amino-acid sequence, 382 residues long: Trophoblast glycoprotein-like (382 aa).

The N-terminal stretch at M1 to P26 is a signal peptide. 2 disulfide bridges follow: C27–C33 and C31–C43. Residues C27–S307 lie on the Extracellular side of the membrane. LRR repeat units lie at residues P57–G80, L93–G116, L117–G140, L171–L194, and R196–A217. N-linked (GlcNAc...) asparagine glycosylation occurs at N62. Intrachain disulfides connect C238–C264 and C240–C285. The helical transmembrane segment at Y308–L328 threads the bilayer. Over N329 to L382 the chain is Cytoplasmic. Residues D358–L382 are disordered. Residues P365–L382 are compositionally biased toward low complexity.

It localises to the membrane. This Homo sapiens (Human) protein is Trophoblast glycoprotein-like (TPBGL).